Reading from the N-terminus, the 582-residue chain is Protein alan shepard (582 aa).

The segment covering 1 to 12 has biased composition (pro residues); the sequence is MHPRYSPAPPPQ. Positions 1–73 are disordered; the sequence is MHPRYSPAPP…AAPPTSRSAF (73 aa). At Y5 the chain carries Phosphotyrosine. Over residues 13 to 24 the composition is skewed to low complexity; the sequence is QQQQMGGPPHQQ. Gly residues predominate over residues 25–35; it reads QGGGGGGGGSM. Polar residues predominate over residues 37 to 57; sequence GPSNAQQLPPQIPRSQNYSNG. Positions 58–72 are enriched in low complexity; the sequence is SSSSAAAAPPTSRSA. Phosphotyrosine is present on residues Y125 and Y142. Positions 164–225 are disordered; sequence PATTTYGQRV…TVQNQNQQGG (62 aa). Residues 178–225 show a composition bias toward low complexity; it reads SPSNTNSSSSSNTGSQSGTLSTSLSNTTNTNTNMGPNGTVQNQNQQGG. RRM domains are found at residues 231-304 and 310-389; these read TNLY…MAKQ and TNLY…FADG. The segment at 555–582 is disordered; it reads PMTDSEQASTAASPDEAYTQYPHQAAPK.

Its function is as follows. Has a role in the perception of gravity. The polypeptide is Protein alan shepard (Drosophila erecta (Fruit fly)).